The sequence spans 208 residues: Large ribosomal subunit protein bL25 (208 aa).

The tract at residues 163–208 (DYSYNHEPDEVVASILPPQKQEETEAESAAQDVEEPEKGTEEEKEE) is disordered. Over residues 198–208 (PEKGTEEEKEE) the composition is skewed to basic and acidic residues.

Belongs to the bacterial ribosomal protein bL25 family. CTC subfamily. As to quaternary structure, part of the 50S ribosomal subunit; part of the 5S rRNA/L5/L18/L25 subcomplex. Contacts the 5S rRNA. Binds to the 5S rRNA independently of L5 and L18.

Its function is as follows. This is one of the proteins that binds to the 5S RNA in the ribosome where it forms part of the central protuberance. The polypeptide is Large ribosomal subunit protein bL25 (Bacillus licheniformis (strain ATCC 14580 / DSM 13 / JCM 2505 / CCUG 7422 / NBRC 12200 / NCIMB 9375 / NCTC 10341 / NRRL NRS-1264 / Gibson 46)).